A 311-amino-acid polypeptide reads, in one-letter code: T-cell acute lymphocytic leukemia protein 1 homolog (311 aa).

Residues 1 to 14 (MTMDRPPAPPPPSS) are compositionally biased toward pro residues. The segment at 1-67 (MTMDRPPAPP…RPSPGPPAAA (67 aa)) is disordered. Positions 15–25 (DPRDARRHDPE) are enriched in basic and acidic residues. Residues 179–231 (VRRIFTNSRERWRQQNVNGAFAELRKLIPTHPPDKKLSKNEILRLAMKYINFL) enclose the bHLH domain. Positions 265-311 (SPNSSCGSSLDGAASPDSFTEEHDTLDSKHARNLHHAILPVEGSAQR) are disordered. Basic and acidic residues predominate over residues 284–294 (TEEHDTLDSKH).

Efficient DNA binding requires dimerization with another bHLH protein. Forms heterodimers with TCF3. In terms of processing, phosphorylated on serine residues.

It localises to the nucleus. Its function is as follows. Implicated in the genesis of hemopoietic malignancies. It may play an important role in hemopoietic differentiation. The protein is T-cell acute lymphocytic leukemia protein 1 homolog (TAL1) of Gallus gallus (Chicken).